A 174-amino-acid chain; its full sequence is Larval cuticle protein A1A (174 aa).

Repeat copies occupy residues 45–48 (AAPV) and 67–70 (AAPV). Positions 84-150 (NPQYSFGYDV…AVVHREPLVA (67 aa)) constitute a Chitin-binding type R&amp;R domain. Repeat 3 spans residues 155-158 (AAPA).

Component of the cuticle of the larva of Tenebrio molitor. The protein is Larval cuticle protein A1A of Tenebrio molitor (Yellow mealworm beetle).